The primary structure comprises 319 residues: Tyrosine phosphatase-like protein N3 (319 aa).

The region spanning 7–285 is the Tyrosine-protein phosphatase domain; the sequence is SNLSIHEFWR…LIINKILLHS (279 aa).

The protein belongs to the protein-tyrosine phosphatase family.

The protein is Tyrosine phosphatase-like protein N3 (N7) of Microplitis demolitor bracovirus (isolate Webb) (MdBV).